Consider the following 315-residue polypeptide: Lipoyl synthase (315 aa).

Cysteine 62, cysteine 67, cysteine 73, cysteine 88, cysteine 92, cysteine 95, and serine 302 together coordinate [4Fe-4S] cluster. Residues 73–291 (CFGHGTATFM…GELAKKLGFS (219 aa)) enclose the Radical SAM core domain.

It belongs to the radical SAM superfamily. Lipoyl synthase family. The cofactor is [4Fe-4S] cluster.

Its subcellular location is the cytoplasm. It catalyses the reaction [[Fe-S] cluster scaffold protein carrying a second [4Fe-4S](2+) cluster] + N(6)-octanoyl-L-lysyl-[protein] + 2 oxidized [2Fe-2S]-[ferredoxin] + 2 S-adenosyl-L-methionine + 4 H(+) = [[Fe-S] cluster scaffold protein] + N(6)-[(R)-dihydrolipoyl]-L-lysyl-[protein] + 4 Fe(3+) + 2 hydrogen sulfide + 2 5'-deoxyadenosine + 2 L-methionine + 2 reduced [2Fe-2S]-[ferredoxin]. It participates in protein modification; protein lipoylation via endogenous pathway; protein N(6)-(lipoyl)lysine from octanoyl-[acyl-carrier-protein]: step 2/2. Catalyzes the radical-mediated insertion of two sulfur atoms into the C-6 and C-8 positions of the octanoyl moiety bound to the lipoyl domains of lipoate-dependent enzymes, thereby converting the octanoylated domains into lipoylated derivatives. The protein is Lipoyl synthase of Coxiella burnetii (strain Dugway 5J108-111).